We begin with the raw amino-acid sequence, 67 residues long: Phycobilisome 7.8 kDa linker polypeptide, allophycocyanin-associated, core (67 aa).

A CpcD-like domain is found at 1 to 56 (GRLFKITACVPSQTRIRTQRELQNTYFTKLVPYENWFREQQRIQKMGGKIVKVELA).

Belongs to the phycobilisome linker protein family.

The protein localises to the cellular thylakoid membrane. Functionally, rod linker protein, associated with allophycocyanin. Linker polypeptides determine the state of aggregation and the location of the disk-shaped phycobiliprotein units within the phycobilisome and modulate their spectroscopic properties in order to mediate a directed and optimal energy transfer. This is Phycobilisome 7.8 kDa linker polypeptide, allophycocyanin-associated, core (apcC) from Mastigocladus laminosus (Fischerella sp.).